We begin with the raw amino-acid sequence, 125 residues long: uncharacterized protein (125 aa).

This is an uncharacterized protein from Pasteurella multocida (strain Pm70).